We begin with the raw amino-acid sequence, 141 residues long: Ribosome-binding factor A (141 aa).

The protein belongs to the RbfA family. In terms of assembly, monomer. Binds 30S ribosomal subunits, but not 50S ribosomal subunits or 70S ribosomes.

It localises to the cytoplasm. Its function is as follows. One of several proteins that assist in the late maturation steps of the functional core of the 30S ribosomal subunit. Associates with free 30S ribosomal subunits (but not with 30S subunits that are part of 70S ribosomes or polysomes). Required for efficient processing of 16S rRNA. May interact with the 5'-terminal helix region of 16S rRNA. In Maricaulis maris (strain MCS10) (Caulobacter maris), this protein is Ribosome-binding factor A.